Here is a 572-residue protein sequence, read N- to C-terminus: Proline--tRNA ligase (572 aa).

This sequence belongs to the class-II aminoacyl-tRNA synthetase family. ProS type 1 subfamily. Homodimer.

Its subcellular location is the cytoplasm. The catalysed reaction is tRNA(Pro) + L-proline + ATP = L-prolyl-tRNA(Pro) + AMP + diphosphate. Its function is as follows. Catalyzes the attachment of proline to tRNA(Pro) in a two-step reaction: proline is first activated by ATP to form Pro-AMP and then transferred to the acceptor end of tRNA(Pro). As ProRS can inadvertently accommodate and process non-cognate amino acids such as alanine and cysteine, to avoid such errors it has two additional distinct editing activities against alanine. One activity is designated as 'pretransfer' editing and involves the tRNA(Pro)-independent hydrolysis of activated Ala-AMP. The other activity is designated 'posttransfer' editing and involves deacylation of mischarged Ala-tRNA(Pro). The misacylated Cys-tRNA(Pro) is not edited by ProRS. The polypeptide is Proline--tRNA ligase (Yersinia pestis (strain Pestoides F)).